A 340-amino-acid polypeptide reads, in one-letter code: Heat-inducible transcription repressor HrcA (340 aa).

This sequence belongs to the HrcA family.

Negative regulator of class I heat shock genes (grpE-dnaK-dnaJ and groELS operons). Prevents heat-shock induction of these operons. The sequence is that of Heat-inducible transcription repressor HrcA from Phytoplasma australiense.